A 963-amino-acid chain; its full sequence is Low-density lipoprotein receptor-related protein 8 (963 aa).

Residues 1 to 32 (MGLPEPGPLRLLALLLLLLLLLLLQLQHLAAA) form the signal peptide. The Extracellular segment spans residues 42-826 (GPAKDCEKDQ…SKMGSTVTAA (785 aa)). 7 consecutive LDL-receptor class A domains span residues 46-82 (DCEKDQFQCRNERCIPSVWRCDEDDDCLDHSDEDDCP), 85-123 (TCADSDFTCDNGHCIHERWKCDGEEECPDGSDESEATCT), 126-164 (VCPAEKLSCGPTSHKCVPASWRCDGEKDCEGGADEAGCA), 166-202 (LCAPHEFQCGNRSCLAAVFVCDGDDDCGDGSDERGCA), 205-246 (ACGP…ELCG), 258-295 (ACATASQFACRSGECVHLGWRCDGDRDCKDKSDEADCP), and 298-334 (TCRGDEFQCGDGTCVLAIKHCNQEQDCPDGSDEAGCL). Disulfide bonds link C47–C59, C54–C72, C66–C81, C86–C98, C93–C111, C105–C122, C127–C141, C134–C154, C148–C163, C167–C179, C174–C192, C186–C201, C206–C221, C213–C234, C228–C245, C259–C272, C267–C285, C279–C294, C299–C311, C306–C324, C318–C333, C340–C351, C347–C360, C362–C374, C380–C390, C386–C399, and C401–C414. W64, D67, D69, D71, D77, and E78 together coordinate Ca(2+). An N-linked (GlcNAc...) asparagine glycan is attached at N176. The region spanning 336-375 (GLNECLHNNGGCSHICTDLKIGFECTCPAGFQLLDQKTCG) is the EGF-like 1 domain. The EGF-like 2; calcium-binding domain maps to 376-415 (DIDECKDPDACSQICVNYKGYFKCECYPGYEMDLLTKNCK). N441 carries N-linked (GlcNAc...) asparagine glycosylation. LDL-receptor class B repeat units follow at residues 462–508 (NRIY…DWVH), 509–551 (KHIY…DPLR), 552–595 (GFMY…DLLS), 596–639 (QRLY…VFED), and 640–681 (KVFW…FHEL). Residues N518 and N538 are each glycosylated (N-linked (GlcNAc...) asparagine). The segment at 740–798 (STSTTTLASTMTRTVPATTRAPGTTVHRSTYQNHSTETPSLTAAVPSSVSVPRAPSISP) is clustered O-linked oligosaccharides. The tract at residues 754 to 815 (VPATTRAPGT…SNHSQHYANE (62 aa)) is disordered. Polar residues predominate over residues 765 to 777 (VHRSTYQNHSTET). N-linked (GlcNAc...) asparagine glycosylation is present at N772. A compositionally biased stretch (low complexity) spans 778-799 (PSLTAAVPSSVSVPRAPSISPS). The span at 800–812 (TLSPATSNHSQHY) shows a compositional bias: polar residues. The N-linked (GlcNAc...) asparagine glycan is linked to N807. Residues 827-847 (VIGIIVPIVVIALLCMSGYLI) form a helical membrane-spanning segment. The Cytoplasmic segment spans residues 848–963 (WRNWKRKNTK…ALSLEDDGLP (116 aa)).

Belongs to the LDLR family. As to quaternary structure, homooligomer. Interacts with VLDLR. Reelin associates with two or more receptor molecules. Interacts with DAB1 and JNK-interacting proteins. Interacts with SNX17. Interacts with PCSK9. Interacts with MDK; this interaction is calcium dependent. Interacts with CLU. In terms of assembly, (Microbial infection) Interacts with Semliki Forest virus E2-E1 heterodimer; this interaction mediates viral entry to host cell. (Microbial infection) Interacts (via class A repeats) with Eastern equine encephalitis virus spike glycoprotein E2; this interaction mediates viral entry into host cell. In terms of processing, O-glycosylated. Some alternatively spliced isoforms lack the O-linked sugar domain. Post-translationally, undergoes sequential, furin and gamma-secretase dependent, proteolytic processing, resulting in the extracellular release of the entire ligand-binding domain as a soluble polypeptide and in the intracellular domain (ICD) release into the cytoplasm. The gamma-secretase-dependent proteolytical processing occurs after the bulk of the extracellular domain has been shed, in a furin-dependent manner, in alternatively spliced isoforms carrying the furin cleavage site. Hypoglycosylation (mainly hypo-O-glycosylation) leads to increased extracellular cleavage, which in turn results in accelerating release of the intracellular domain (ICD) by the gamma-secretase. The resulting receptor fragment is able to inhibit Reelin signaling and in particular the Reelin-induced DAB1 phosphorylation. Tyrosine phosphorylated upon apoE binding. In terms of processing, ubiquitinated by MYLIP leading to degradation. As to expression, expressed mainly in brain and placenta. Also expressed in platelets and megakaryocytic cells. Not expressed in the liver.

It localises to the cell membrane. Its subcellular location is the secreted. In terms of biological role, cell surface receptor for Reelin (RELN) and apolipoprotein E (apoE)-containing ligands. LRP8 participates in transmitting the extracellular Reelin signal to intracellular signaling processes, by binding to DAB1 on its cytoplasmic tail. Reelin acts via both the VLDL receptor (VLDLR) and LRP8 to regulate DAB1 tyrosine phosphorylation and microtubule function in neurons. LRP8 has higher affinity for Reelin than VLDLR. LRP8 is thus a key component of the Reelin pathway which governs neuronal layering of the forebrain during embryonic brain development. Binds the endoplasmic reticulum resident receptor-associated protein (RAP). Binds dimers of beta 2-glycoprotein I and may be involved in the suppression of platelet aggregation in the vasculature. Highly expressed in the initial segment of the epididymis, where it affects the functional expression of clusterin and phospholipid hydroperoxide glutathione peroxidase (PHGPx), two proteins required for sperm maturation. May also function as an endocytic receptor. Not required for endocytic uptake of SEPP1 in the kidney which is mediated by LRP2. Together with its ligand, apolipoprotein E (apoE), may indirectly play a role in the suppression of the innate immune response by controlling the survival of myeloid-derived suppressor cells. (Microbial infection) Acts as a receptor for Semliki Forest virus. This is Low-density lipoprotein receptor-related protein 8 (LRP8) from Homo sapiens (Human).